The primary structure comprises 72 residues: UPF0270 protein YheU (72 aa).

Belongs to the UPF0270 family.

The polypeptide is UPF0270 protein YheU (Shigella flexneri serotype 5b (strain 8401)).